The sequence spans 135 residues: Class I hydrophobin 15 (135 aa).

Positions 1 to 21 (MFAKSATIAIVLAALAGFSAA) are cleaved as a signal peptide. Cystine bridges form between Cys-50–Cys-113, Cys-57–Cys-107, Cys-58–Cys-97, and Cys-114–Cys-127. Asn-131 carries an N-linked (GlcNAc...) asparagine glycan.

The protein belongs to the fungal hydrophobin family. As to quaternary structure, self-assembles to form functional amyloid fibrils called rodlets. Self-assembly into fibrillar rodlets occurs spontaneously at hydrophobic:hydrophilic interfaces and the rodlets further associate laterally to form amphipathic monolayers.

It localises to the secreted. The protein localises to the cell wall. Aerial growth, conidiation, and dispersal of filamentous fungi in the environment rely upon a capability of their secreting small amphipathic proteins called hydrophobins (HPBs) with low sequence identity. Class I can self-assemble into an outermost layer of rodlet bundles on aerial cell surfaces, conferring cellular hydrophobicity that supports fungal growth, development and dispersal; whereas Class II form highly ordered films at water-air interfaces through intermolecular interactions but contribute nothing to the rodlet structure. The polypeptide is Class I hydrophobin 15 (Pleurotus ostreatus (strain PC15) (Oyster mushroom)).